A 421-amino-acid polypeptide reads, in one-letter code: Histidine--tRNA ligase (421 aa).

It belongs to the class-II aminoacyl-tRNA synthetase family. As to quaternary structure, homodimer.

Its subcellular location is the cytoplasm. The enzyme catalyses tRNA(His) + L-histidine + ATP = L-histidyl-tRNA(His) + AMP + diphosphate + H(+). The sequence is that of Histidine--tRNA ligase from Francisella tularensis subsp. holarctica (strain FTNF002-00 / FTA).